The chain runs to 860 residues: DNA mismatch repair protein MutS (860 aa).

618–625 contacts ATP; sequence GPNMGGKS.

The protein belongs to the DNA mismatch repair MutS family.

This protein is involved in the repair of mismatches in DNA. It is possible that it carries out the mismatch recognition step. This protein has a weak ATPase activity. In Hahella chejuensis (strain KCTC 2396), this protein is DNA mismatch repair protein MutS.